Consider the following 428-residue polypeptide: Enolase (428 aa).

Gln-163 provides a ligand contact to (2R)-2-phosphoglycerate. Glu-205 acts as the Proton donor in catalysis. The Mg(2+) site is built by Asp-242, Glu-285, and Asp-312. (2R)-2-phosphoglycerate-binding residues include Lys-337, Arg-366, Ser-367, and Lys-388. Lys-337 acts as the Proton acceptor in catalysis.

It belongs to the enolase family. It depends on Mg(2+) as a cofactor.

The protein resides in the cytoplasm. It localises to the secreted. It is found in the cell surface. The catalysed reaction is (2R)-2-phosphoglycerate = phosphoenolpyruvate + H2O. The protein operates within carbohydrate degradation; glycolysis; pyruvate from D-glyceraldehyde 3-phosphate: step 4/5. Catalyzes the reversible conversion of 2-phosphoglycerate (2-PG) into phosphoenolpyruvate (PEP). It is essential for the degradation of carbohydrates via glycolysis. The sequence is that of Enolase from Neisseria gonorrhoeae (strain ATCC 700825 / FA 1090).